The sequence spans 523 residues: Cytidine and dCMP deaminase domain-containing protein 1 (523 aa).

Positions 1–11 (MKETDQMQSLE) are enriched in polar residues. Disordered stretches follow at residues 1–27 (MKET…GSMT) and 55–81 (QGQK…RVST). The CMP/dCMP-type deaminase 1 domain occupies 71 to 169 (GDNEELTRVS…SLLTEASSSE (99 aa)). Zn(2+) is bound by residues H110, C135, and C138. Residues 272 to 284 (NLRQNMKDLILLL) carry the Nuclear export signal motif. Residues 318-483 (EVARHCMVQA…LNPSEAYSLD (166 aa)) form the CMP/dCMP-type deaminase 2 domain. H399 provides a ligand contact to Zn(2+). Catalysis depends on E401, which acts as the Proton donor. C427 and C430 together coordinate Zn(2+). Residues 478–523 (EAYSLDPNEPERRENGVLRRRSAKDEQRSSKRPRLETRSAGRATLQ) are disordered. A compositionally biased stretch (basic and acidic residues) spans 486–516 (EPERRENGVLRRRSAKDEQRSSKRPRLETRS). The short motif at 489–511 (RRENGVLRRRSAKDEQRSSKRPR) is the Bipartite nuclear localization signal element.

It belongs to the cytidine and deoxycytidylate deaminase family. It depends on Zn(2+) as a cofactor.

It localises to the cytoplasm. It is found in the nucleus. It catalyses the reaction 2'-deoxycytidine + H2O + H(+) = 2'-deoxyuridine + NH4(+). The enzyme catalyses cytidine + H2O + H(+) = uridine + NH4(+). Catalyzes the deamination of cytidine and deoxycytidine into uridine and deoxyuridine, respectively. May play an important role in testicular development and spermatogenesis. This is Cytidine and dCMP deaminase domain-containing protein 1 (Cdadc1) from Mus musculus (Mouse).